The sequence spans 603 residues: Polypeptide N-acetylgalactosaminyltransferase 10 (603 aa).

The Cytoplasmic segment spans residues 1–11 (MRRKEKRLLQA). Residues 12 to 31 (VALALAALVLLPNVGLWALY) traverse the membrane as a helical; Signal-anchor for type II membrane protein segment. At 32-603 (RERQPDGSPG…STVLENFNKN (572 aa)) the chain is on the lumenal side. Residues N124 and N146 are each glycosylated (N-linked (GlcNAc...) asparagine). Intrachain disulfides connect C135–C365, C356–C432, C471–C488, C523–C538, and C563–C578. The tract at residues 144 to 253 (LPNTSIIIPF…VNWLPPLLDR (110 aa)) is catalytic subdomain A. Substrate is bound by residues D185 and R214. Residue D237 coordinates Mn(2+). Residue S238 participates in substrate binding. Residue H239 participates in Mn(2+) binding. The catalytic subdomain B stretch occupies residues 311–373 (PFESPVMAGG…PCSRVGHIYR (63 aa)). Substrate is bound at residue W342. Position 370 (H370) interacts with Mn(2+). Substrate is bound by residues R373 and Y378. Residues 373–384 (RKYVPYKVPAGV) form a flexible loop region. The Ricin B-type lectin domain occupies 458–590 (AAWGEIRNVG…SSLTQQWLFE (133 aa)). N-linked (GlcNAc...) asparagine glycosylation is present at N593.

This sequence belongs to the glycosyltransferase 2 family. GalNAc-T subfamily. Mn(2+) is required as a cofactor. Expressed at higher level than GALNT9. In the developing hindbrain region of 14.5 dpc embryos it accumulates in the rapidly dividing, undifferentiated ventricular zone adjacent to the pons. It also accumulates in the regions immediately rostral and caudal to the dorsal rhombic lips differentiating into the cerebellum. Not expressed in the developing choroid plexus.

It is found in the golgi apparatus membrane. It carries out the reaction L-seryl-[protein] + UDP-N-acetyl-alpha-D-galactosamine = a 3-O-[N-acetyl-alpha-D-galactosaminyl]-L-seryl-[protein] + UDP + H(+). The catalysed reaction is L-threonyl-[protein] + UDP-N-acetyl-alpha-D-galactosamine = a 3-O-[N-acetyl-alpha-D-galactosaminyl]-L-threonyl-[protein] + UDP + H(+). It functions in the pathway protein modification; protein glycosylation. Functionally, catalyzes the initial reaction in O-linked oligosaccharide biosynthesis, the transfer of an N-acetyl-D-galactosamine residue to a serine or threonine residue on the protein receptor. Has activity toward Muc5Ac and EA2 peptide substrates. The protein is Polypeptide N-acetylgalactosaminyltransferase 10 (Galnt10) of Mus musculus (Mouse).